We begin with the raw amino-acid sequence, 324 residues long: tRNA N6-adenosine threonylcarbamoyltransferase (324 aa).

Residues histidine 107, histidine 111, and tyrosine 128 each coordinate Fe cation. Residues 128-132, aspartate 160, glycine 173, glutamate 177, and asparagine 256 each bind substrate; that span reads YVSGG. Aspartate 284 contacts Fe cation.

This sequence belongs to the KAE1 / TsaD family. Monomer. Component of the KEOPS complex that consists of Kae1, Bud32, Cgi121 and Pcc1; the whole complex dimerizes. Fe(2+) is required as a cofactor.

It localises to the cytoplasm. It catalyses the reaction L-threonylcarbamoyladenylate + adenosine(37) in tRNA = N(6)-L-threonylcarbamoyladenosine(37) in tRNA + AMP + H(+). In terms of biological role, required for the formation of a threonylcarbamoyl group on adenosine at position 37 (t(6)A37) in tRNAs that read codons beginning with adenine. Is a component of the KEOPS complex that is probably involved in the transfer of the threonylcarbamoyl moiety of threonylcarbamoyl-AMP (TC-AMP) to the N6 group of A37. Kae1 likely plays a direct catalytic role in this reaction, but requires other protein(s) of the complex to fulfill this activity. In Methanothrix thermoacetophila (strain DSM 6194 / JCM 14653 / NBRC 101360 / PT) (Methanosaeta thermophila), this protein is tRNA N6-adenosine threonylcarbamoyltransferase.